The sequence spans 906 residues: Envelope glycoprotein B (906 aa).

Positions Met-1–Ala-31 are cleaved as a signal peptide. Residues Ser-29–Ser-46 are compositionally biased toward low complexity. The segment at Ser-29–Ser-51 is disordered. Residues Thr-32–Pro-750 are Virion surface-facing. N-linked (GlcNAc...) asparagine; by host glycosylation is found at Asn-37, Asn-68, Asn-73, and Asn-85. 5 cysteine pairs are disulfide-bonded: Cys-94–Cys-550, Cys-111–Cys-506, Cys-185–Cys-250, Cys-246–Cys-250, and Cys-344–Cys-391. Residues Ser-152–Thr-158 are involved in fusion and/or binding to host membrane. The N-linked (GlcNAc...) asparagine; by host glycan is linked to Asn-208. An involved in fusion and/or binding to host membrane region spans residues Gly-237–Glu-244. Residues Asn-281, Asn-286, Asn-302, Asn-341, Asn-383, Asn-405, Asn-409, Asn-417, Asn-447, Asn-452, Asn-464, Asn-465, Asn-554, and Asn-585 are each glycosylated (N-linked (GlcNAc...) asparagine; by host). Cys-573 and Cys-610 are oxidised to a cystine. Hydrophobic membrane proximal region regions lie at residues Val-696–Lys-748 and Val-727–Leu-747. The chain crosses the membrane as a helical span at residues Phe-751–Tyr-771. Residues Thr-772 to Val-906 are Intravirion-facing. Composition is skewed to polar residues over residues Val-797–Ala-809 and Arg-859–Asp-876. Disordered regions lie at residues Val-797 to Pro-837 and Ala-856 to Val-906. The segment covering Lys-877–Arg-886 has biased composition (basic and acidic residues). The short motif at Tyr-894–Leu-897 is the Internalization motif element.

The protein belongs to the herpesviridae glycoprotein B family. As to quaternary structure, homotrimer; disulfide-linked. Binds to heparan sulfate proteoglycans. Interacts with gH/gL heterodimer. Interacts with host TLR1 and TLR2. Interacts with host C-type lectin CD209/DC-SIGN. Interacts with host ITGB1, EGFR, and PDGFRA. Post-translationally, a proteolytic cleavage by host furin generates two subunits that remain linked by disulfide bonds.

The protein localises to the virion membrane. It is found in the host cell membrane. It localises to the host endosome membrane. The protein resides in the host Golgi apparatus membrane. Envelope glycoprotein that plays a role in host cell entry, cell to-cell virus transmission, and fusion of infected cells. May be involved in the initial attachment via binding to heparan sulfate together with the gM/gN complex that binds heparin with higher affinity. Interacts with host integrin ITGB1, PDGFRA and EGFR that likely serve as postattachment entry receptors. Also participates in the fusion of viral and cellular membranes leading to virus entry into the host cell. Membrane fusion is mediated by the fusion machinery composed at least of gB and the heterodimer gH/gL. This is Envelope glycoprotein B from Human cytomegalovirus (strain AD169) (HHV-5).